We begin with the raw amino-acid sequence, 994 residues long: UPF0182 protein Strop_3729 (994 aa).

7 consecutive transmembrane segments (helical) span residues 18-38, 61-81, 110-130, 174-194, 209-229, 260-280, and 283-303; these read IGVLVGVFVLFTLLGWGVQAW, LLLFVTVGLAMAVIVGGNLWL, IGLWFATVSVVVGLFAGLSAQ, FTAVVLALLGALAVHYVFGGI, AHLSTLVAVFVLLKAVAYVLD, ILAYISVVVAIAVLVFSNAWM, and LVWPGISLALLGVSAVAIGGI. Disordered regions lie at residues 891–934 and 970–994; these read GEQA…AEAA and FEQAAASTPAATPTAAPTGSPSPGG. A compositionally biased stretch (pro residues) spans 897 to 926; the sequence is PSPPPSDDETPPSPTPTPTPTTPSVTPPPL.

The protein belongs to the UPF0182 family.

Its subcellular location is the cell membrane. The protein is UPF0182 protein Strop_3729 of Salinispora tropica (strain ATCC BAA-916 / DSM 44818 / JCM 13857 / NBRC 105044 / CNB-440).